An 886-amino-acid polypeptide reads, in one-letter code: Alanine--tRNA ligase (886 aa).

Zn(2+) contacts are provided by H564, H568, C666, and H670.

Belongs to the class-II aminoacyl-tRNA synthetase family. Zn(2+) serves as cofactor.

The protein resides in the cytoplasm. It catalyses the reaction tRNA(Ala) + L-alanine + ATP = L-alanyl-tRNA(Ala) + AMP + diphosphate. Functionally, catalyzes the attachment of alanine to tRNA(Ala) in a two-step reaction: alanine is first activated by ATP to form Ala-AMP and then transferred to the acceptor end of tRNA(Ala). Also edits incorrectly charged Ser-tRNA(Ala) and Gly-tRNA(Ala) via its editing domain. The polypeptide is Alanine--tRNA ligase (Prochlorococcus marinus (strain AS9601)).